A 122-amino-acid polypeptide reads, in one-letter code: Large ribosomal subunit protein uL14c (122 aa).

The protein belongs to the universal ribosomal protein uL14 family. In terms of assembly, part of the 50S ribosomal subunit.

The protein localises to the plastid. Its subcellular location is the chloroplast. Functionally, binds to 23S rRNA. The chain is Large ribosomal subunit protein uL14c from Chloranthus spicatus (Chulantree).